A 176-amino-acid polypeptide reads, in one-letter code: Ribosome maturation factor RimM (176 aa).

One can recognise a PRC barrel domain in the interval 97-176 (EDEFYWRDLI…QILVDWDPDF (80 aa)).

Belongs to the RimM family. As to quaternary structure, binds ribosomal protein uS19.

Its subcellular location is the cytoplasm. An accessory protein needed during the final step in the assembly of 30S ribosomal subunit, possibly for assembly of the head region. Essential for efficient processing of 16S rRNA. May be needed both before and after RbfA during the maturation of 16S rRNA. It has affinity for free ribosomal 30S subunits but not for 70S ribosomes. In Shewanella loihica (strain ATCC BAA-1088 / PV-4), this protein is Ribosome maturation factor RimM.